The chain runs to 132 residues: UPF0212 protein PYRAB08340 (132 aa).

The protein belongs to the UPF0212 family.

In Pyrococcus abyssi (strain GE5 / Orsay), this protein is UPF0212 protein PYRAB08340.